The chain runs to 542 residues: Hydroxylamine reductase (542 aa).

4 residues coordinate [4Fe-4S] cluster: Cys3, Cys6, Cys15, and Cys21. Hybrid [4Fe-2O-2S] cluster-binding residues include His238, Glu262, Cys307, Cys398, Cys426, Cys451, Glu485, and Lys487. Position 398 is a cysteine persulfide (Cys398).

This sequence belongs to the HCP family. [4Fe-4S] cluster is required as a cofactor. Requires hybrid [4Fe-2O-2S] cluster as cofactor.

It localises to the cytoplasm. It carries out the reaction A + NH4(+) + H2O = hydroxylamine + AH2 + H(+). Functionally, catalyzes the reduction of hydroxylamine to form NH(3) and H(2)O. This chain is Hydroxylamine reductase, found in Microcystis aeruginosa (strain NIES-843 / IAM M-2473).